The sequence spans 274 residues: NAD kinase (274 aa).

Aspartate 61 serves as the catalytic Proton acceptor. Residues 61-62 (DG), lysine 66, 134-135 (ND), lysine 145, aspartate 164, and 175-180 (TAYSLS) each bind NAD(+).

This sequence belongs to the NAD kinase family. A divalent metal cation is required as a cofactor.

It localises to the cytoplasm. It catalyses the reaction NAD(+) + ATP = ADP + NADP(+) + H(+). In terms of biological role, involved in the regulation of the intracellular balance of NAD and NADP, and is a key enzyme in the biosynthesis of NADP. Catalyzes specifically the phosphorylation on 2'-hydroxyl of the adenosine moiety of NAD to yield NADP. This Clostridium tetani (strain Massachusetts / E88) protein is NAD kinase.